Consider the following 478-residue polypeptide: GDP-fucose protein O-fucosyltransferase 3 (478 aa).

Residues methionine 1–arginine 8 lie on the Cytoplasmic side of the membrane. The helical; Signal-anchor for type II membrane protein transmembrane segment at leucine 9–glutamate 31 threads the bilayer. Residues leucine 32–aspartate 478 lie on the Lumenal side of the membrane. 2 N-linked (GlcNAc...) asparagine glycosylation sites follow: asparagine 110 and asparagine 168. A disulfide bond links cysteine 389 and cysteine 392.

This sequence belongs to the glycosyltransferase 10 family.

The protein localises to the endoplasmic reticulum membrane. It carries out the reaction L-threonyl-[protein] + GDP-beta-L-fucose = 3-O-(alpha-L-fucosyl)-L-threonyl-[protein] + GDP + H(+). The catalysed reaction is L-seryl-[protein] + GDP-beta-L-fucose = 3-O-(alpha-L-fucosyl)-L-seryl-[protein] + GDP + H(+). It functions in the pathway protein modification; protein glycosylation. Its function is as follows. Protein O-fucosyltransferase that specifically catalyzes O-fucosylation of serine or threonine residues in EMI domains of target proteins, such as MMRN1, MMRN2 and EMID1. Attaches fucose through an O-glycosidic linkage. O-fucosylation of EMI domain-containing proteins may be required for facilitating protein folding and secretion. May also show alpha-(1,3)-fucosyltransferase activity toward the innermost N-acetyl glucosamine (GlcNAc) residue in biantennary N-glycan acceptors. However, this was tested with a library of synthetic substrates and this activity is unsure in vivo. May be involved in biosynthesis of Lewis X-carrying biantennary N-glycans that regulate neuron stem cell self-renewal during brain development. The sequence is that of GDP-fucose protein O-fucosyltransferase 3 (FUT10) from Canis lupus familiaris (Dog).